The chain runs to 375 residues: MPRPISITVDLDAIRQNFAYANALGVNALESSINDRQSNTLAVIKADAYGHGAVATARALNGQAALLAVSSIEEAVSLRQHHIKTPILLLEGCFCPSELSVVNELNLQIVIHNQKQIEDLLAQVLTKPIKVWLKVDTGMHRLGIPVSDALKAYTQLASSKNVCSVMLMTHFATSDHPDHPLLLSQIQSIQKLAEKVSAEPSYAGCSLANSAALLATPKSISTWNRPGIMLYGISPFNQSDINVLPLIPAMTFSSKVIALRRVATGESVGYGAIWTAKRPSIIATVAAGYGDGYPRTAKSGTPVMVNGQIAPLAGRVSMDMLCVDVTQLTDISEGSPVELWGKNIPVNDVAAWADTLGYELVTRMPTRAKRVFINE.

Residue K45 is the Proton acceptor; specific for D-alanine of the active site. K45 is subject to N6-(pyridoxal phosphate)lysine. R141 serves as a coordination point for substrate. The active-site Proton acceptor; specific for L-alanine is Y270. M318 is a substrate binding site.

This sequence belongs to the alanine racemase family. It depends on pyridoxal 5'-phosphate as a cofactor.

It carries out the reaction L-alanine = D-alanine. The protein operates within amino-acid biosynthesis; D-alanine biosynthesis; D-alanine from L-alanine: step 1/1. Functionally, catalyzes the interconversion of L-alanine and D-alanine. May also act on other amino acids. This chain is Alanine racemase (alr), found in Pseudoalteromonas atlantica (strain T6c / ATCC BAA-1087).